The sequence spans 173 residues: Shikimate kinase 2 (173 aa).

12-17 contributes to the ATP binding site; that stretch reads GCGKTT. The Mg(2+) site is built by Thr-16 and Asp-32. Asp-34, Arg-58, and Gly-79 together coordinate substrate. An LID domain region spans residues 112–126; sequence EENPQDNQRPTLTGR. Residue Arg-120 participates in ATP binding. Arg-139 provides a ligand contact to substrate. Gln-155 is an ATP binding site.

Belongs to the shikimate kinase family. AroL subfamily. As to quaternary structure, monomer. It depends on Mg(2+) as a cofactor.

It is found in the cytoplasm. The catalysed reaction is shikimate + ATP = 3-phosphoshikimate + ADP + H(+). It functions in the pathway metabolic intermediate biosynthesis; chorismate biosynthesis; chorismate from D-erythrose 4-phosphate and phosphoenolpyruvate: step 5/7. Catalyzes the specific phosphorylation of the 3-hydroxyl group of shikimic acid using ATP as a cosubstrate. This Pectobacterium carotovorum subsp. carotovorum (strain PC1) protein is Shikimate kinase 2.